We begin with the raw amino-acid sequence, 424 residues long: Serine hydroxymethyltransferase (424 aa).

Residues Leu118 and 122-124 each bind (6S)-5,6,7,8-tetrahydrofolate; that span reads GHL. At Lys227 the chain carries N6-(pyridoxal phosphate)lysine. Residues Glu243 and 351–353 each bind (6S)-5,6,7,8-tetrahydrofolate; that span reads SPF.

It belongs to the SHMT family. As to quaternary structure, homodimer. Pyridoxal 5'-phosphate is required as a cofactor.

It is found in the cytoplasm. The enzyme catalyses (6R)-5,10-methylene-5,6,7,8-tetrahydrofolate + glycine + H2O = (6S)-5,6,7,8-tetrahydrofolate + L-serine. It functions in the pathway one-carbon metabolism; tetrahydrofolate interconversion. The protein operates within amino-acid biosynthesis; glycine biosynthesis; glycine from L-serine: step 1/1. Its function is as follows. Catalyzes the reversible interconversion of serine and glycine with tetrahydrofolate (THF) serving as the one-carbon carrier. This reaction serves as the major source of one-carbon groups required for the biosynthesis of purines, thymidylate, methionine, and other important biomolecules. Also exhibits THF-independent aldolase activity toward beta-hydroxyamino acids, producing glycine and aldehydes, via a retro-aldol mechanism. This chain is Serine hydroxymethyltransferase, found in Thermosipho africanus (strain TCF52B).